The sequence spans 228 residues: C-type lectin domain-containing protein 88 (228 aa).

The N-terminal stretch at M1–A18 is a signal peptide. An O-linked (Xyl...) (chondroitin sulfate) serine glycan is attached at S27. In terms of domain architecture, C-type lectin spans Y88–E218. 2 disulfides stabilise this stretch: C109–C217 and C188–C209. The N-linked (GlcNAc...) asparagine glycan is linked to N220.

The protein is C-type lectin domain-containing protein 88 of Caenorhabditis elegans.